Consider the following 79-residue polypeptide: ATP synthase subunit c (79 aa).

A run of 2 helical transmembrane segments spans residues Met11–Leu31 and Phe53–Tyr73.

The protein belongs to the ATPase C chain family. F-type ATPases have 2 components, F(1) - the catalytic core - and F(0) - the membrane proton channel. F(1) has five subunits: alpha(3), beta(3), gamma(1), delta(1), epsilon(1). F(0) has three main subunits: a(1), b(2) and c(10-14). The alpha and beta chains form an alternating ring which encloses part of the gamma chain. F(1) is attached to F(0) by a central stalk formed by the gamma and epsilon chains, while a peripheral stalk is formed by the delta and b chains.

It is found in the cell inner membrane. Functionally, f(1)F(0) ATP synthase produces ATP from ADP in the presence of a proton or sodium gradient. F-type ATPases consist of two structural domains, F(1) containing the extramembraneous catalytic core and F(0) containing the membrane proton channel, linked together by a central stalk and a peripheral stalk. During catalysis, ATP synthesis in the catalytic domain of F(1) is coupled via a rotary mechanism of the central stalk subunits to proton translocation. In terms of biological role, key component of the F(0) channel; it plays a direct role in translocation across the membrane. A homomeric c-ring of between 10-14 subunits forms the central stalk rotor element with the F(1) delta and epsilon subunits. In Yersinia enterocolitica serotype O:8 / biotype 1B (strain NCTC 13174 / 8081), this protein is ATP synthase subunit c.